The primary structure comprises 561 residues: Zinc finger protein 394 (561 aa).

Phosphoserine is present on Ser12. A Glycyl lysine isopeptide (Lys-Gly) (interchain with G-Cter in SUMO2) cross-link involves residue Lys40. A disordered region spans residues 43 to 62 (EDSLGSWEPSYPAASPDPET). The 83-residue stretch at 64–146 (RLHFRQLRYQ…AVVRALQRAL (83 aa)) folds into the SCAN box domain. Residues 155-230 (VTFEDMAVSL…LQEAFQGKRP (76 aa)) form the KRAB domain. Residues Lys203 and Lys228 each participate in a glycyl lysine isopeptide (Lys-Gly) (interchain with G-Cter in SUMO2) cross-link. A compositionally biased stretch (basic and acidic residues) spans 238–247 (THEDRVEKQS). Residues 238–283 (THEDRVEKQSGDPLPLKLENSPEAEGFNSISDVNKNGSIEGEDSKN) are disordered. Residue Lys254 forms a Glycyl lysine isopeptide (Lys-Gly) (interchain with G-Cter in SUMO2) linkage. Positions 265–274 (NSISDVNKNG) are enriched in polar residues. Lys282 is covalently cross-linked (Glycyl lysine isopeptide (Lys-Gly) (interchain with G-Cter in SUMO2)). 7 consecutive C2H2-type zinc fingers follow at residues 358–380 (YKCG…QRIH), 386–408 (YGCQ…QRTH), 414–436 (YTCL…QSTH), 442–463 (FKCE…QRLH), 469–491 (YKCE…HRIH), 497–519 (YGCS…QRIH), and 525–547 (YKCL…QRIH). Lys443 participates in a covalent cross-link: Glycyl lysine isopeptide (Lys-Gly) (interchain with G-Cter in SUMO2).

It belongs to the krueppel C2H2-type zinc-finger protein family.

Its subcellular location is the nucleus. Its function is as follows. May be involved in transcriptional regulation. The chain is Zinc finger protein 394 (ZNF394) from Pan paniscus (Pygmy chimpanzee).